Here is a 278-residue protein sequence, read N- to C-terminus: Urease accessory protein UreD 3 (278 aa).

This sequence belongs to the UreD family. In terms of assembly, ureD, UreF and UreG form a complex that acts as a GTP-hydrolysis-dependent molecular chaperone, activating the urease apoprotein by helping to assemble the nickel containing metallocenter of UreC. The UreE protein probably delivers the nickel.

It is found in the cytoplasm. In terms of biological role, required for maturation of urease via the functional incorporation of the urease nickel metallocenter. In Bradyrhizobium sp. (strain BTAi1 / ATCC BAA-1182), this protein is Urease accessory protein UreD 3.